A 199-amino-acid polypeptide reads, in one-letter code: Transcription regulator complex subunit bur6 (199 aa).

Residues 106 to 199 form a disordered region; it reads PPIKAERKTK…SEASSASGDE (94 aa). Residues 112 to 121 show a composition bias toward basic residues; that stretch reads RKTKRPRARR. Positions 185–199 are enriched in polar residues; the sequence is SDKTTSEASSASGDE.

Belongs to the NC2 alpha/DRAP1 family.

It localises to the nucleus. Functionally, transcription regulator complex subunit that is essential for cell cycle progression. This is Transcription regulator complex subunit bur6 from Schizosaccharomyces pombe (strain 972 / ATCC 24843) (Fission yeast).